A 65-amino-acid polypeptide reads, in one-letter code: MSKLKTRKSAAKRFKATATGKFMRRRAFHNHLLDHKSSKLKRHLSTKAVVDERDADNVRLMIPYA.

The protein belongs to the bacterial ribosomal protein bL35 family.

This chain is Large ribosomal subunit protein bL35, found in Prochlorococcus marinus (strain MIT 9215).